The chain runs to 662 residues: Acyl-coenzyme A oxidase acox-1.4 (662 aa).

FAD is bound by residues 148–151 (YAQT), 156–157 (GT), and glycine 190. Substrate contacts are provided by residues 284–287 (KVNH) and arginine 294. Residues arginine 319 and 339-342 (QQHR) contribute to the FAD site. Histidine 341, serine 391, histidine 395, and glutamine 403 together coordinate ATP. An FAD-binding site is contributed by glycine 410. Substrate is bound at residue 432–433 (YE). Glutamate 433 functions as the Proton acceptor in the catalytic mechanism. Residue glutamate 435 participates in FAD binding. Residues 526-529 (RASR) and tyrosine 574 contribute to the ATP site. A Microbody targeting signal motif is present at residues 660–662 (AKL).

The protein belongs to the acyl-CoA oxidase family. Homodimer. It depends on FAD as a cofactor.

It is found in the peroxisome. It catalyses the reaction asc-C9-CoA + O2 = asc-DeltaC9-CoA + H2O2. Its pathway is lipid metabolism; peroxisomal fatty acid beta-oxidation. Activated by ATP. ATP binding leads to a conformational change that promotes FAD cofactor binding and enzyme activity. ATP binding likely occurs during acox-1.4 folding and/or dimer formation. Functionally, involved in the first step of peroxisomal beta-oxidation by catalyzing the desaturation of fatty acid-derived side chains of ascaroside pheromones, which regulates development and behavior. Specifically, shortens ascarosides with a 9-carbon side chain (asc-C9) and, in association with acox-1.1, may contribute to the shortening of ascarosides with a 11-carbon side chain (asc-C11). May contribute to the production of indol-3-carbonyl(IC)-ascarosides in association with acox-1.1 and acox-3. The protein is Acyl-coenzyme A oxidase acox-1.4 of Caenorhabditis elegans.